The following is a 445-amino-acid chain: Phosphoglucosamine mutase (445 aa).

The active-site Phosphoserine intermediate is Ser99. Ser99, Asp242, Asp244, and Asp246 together coordinate Mg(2+). Ser99 is modified (phosphoserine).

This sequence belongs to the phosphohexose mutase family. It depends on Mg(2+) as a cofactor. In terms of processing, activated by phosphorylation.

The catalysed reaction is alpha-D-glucosamine 1-phosphate = D-glucosamine 6-phosphate. Functionally, catalyzes the conversion of glucosamine-6-phosphate to glucosamine-1-phosphate. This chain is Phosphoglucosamine mutase, found in Helicobacter pylori (strain Shi470).